The primary structure comprises 433 residues: Pyrimidine-nucleoside phosphorylase (433 aa).

81-83 is a binding site for phosphate; that stretch reads KHS. K(+) contacts are provided by glycine 88 and threonine 90. Residues threonine 92, 108-110, and threonine 120 contribute to the phosphate site; that span reads KMS. Positions 168 and 187 each coordinate substrate. K(+) is bound by residues leucine 243, alanine 246, and glutamate 255.

The protein belongs to the thymidine/pyrimidine-nucleoside phosphorylase family. Homodimer. It depends on K(+) as a cofactor.

The enzyme catalyses uridine + phosphate = alpha-D-ribose 1-phosphate + uracil. It catalyses the reaction thymidine + phosphate = 2-deoxy-alpha-D-ribose 1-phosphate + thymine. It carries out the reaction 2'-deoxyuridine + phosphate = 2-deoxy-alpha-D-ribose 1-phosphate + uracil. In terms of biological role, catalyzes phosphorolysis of the pyrimidine nucleosides uridine, thymidine and 2'-deoxyuridine with the formation of the corresponding pyrimidine base and ribose-1-phosphate. The polypeptide is Pyrimidine-nucleoside phosphorylase (pdp) (Geobacillus stearothermophilus (Bacillus stearothermophilus)).